Reading from the N-terminus, the 498-residue chain is MAKSNSKDIVLIGAGVLSTTFGSMLKEIEPDWNIHVYERLDRPAIESSNERNNAGTGHAALCELNYTVLQPDGSIDIEKAKVINEEFEISKQFWGHLVKSGSIENPREFINPLPHISYVRGKNNVKFLKDRYEAMKAFPMFDNIEYTEDIEVMKKWIPLMMKGREDNPGIMAASKIDEGTDVNFGELTRKMAKSIEAHPNATVQFNHEVVDFEQLSNGQWEVTVKNRLTGEKFKQVTDYVFIGAGGGAIPLLQKTGIPESKHLGGFPISGQFLACTNPQVIEQHDAKVYGKEPPGTPPMTVPHLDTRYIDGQRTLLFGPFANVGPKFLKNGSNLDLFKSVKTYNITTLLAAAVKNLPLIKYSFDQVIMTKEGCMNHLRTFYPEARNEDWQLYTAGKRVQVIKDTPEHGKGFIQFGTEVVNSQDHTVIALLGESPGASTSVSVALEVLERNFPEYKTEWAPKIKKMIPSYGESLIEDEKLMRKIRKQTSKDLELGYYEN.

It belongs to the MQO family. It depends on FAD as a cofactor.

It carries out the reaction (S)-malate + a quinone = a quinol + oxaloacetate. It functions in the pathway carbohydrate metabolism; tricarboxylic acid cycle; oxaloacetate from (S)-malate (quinone route): step 1/1. This chain is Probable malate:quinone oxidoreductase 2, found in Staphylococcus aureus (strain COL).